Here is a 225-residue protein sequence, read N- to C-terminus: Lectin (225 aa).

Homotetramer.

Its function is as follows. Chitin-binding lectin. Agglutinates rabbit erythrocytes, but not human erythrocytes. This Vachellia farnesiana (Sweet acacia) protein is Lectin.